We begin with the raw amino-acid sequence, 103 residues long: Large ribosomal subunit protein uL24 (103 aa).

It belongs to the universal ribosomal protein uL24 family. In terms of assembly, part of the 50S ribosomal subunit.

Its function is as follows. One of two assembly initiator proteins, it binds directly to the 5'-end of the 23S rRNA, where it nucleates assembly of the 50S subunit. Functionally, one of the proteins that surrounds the polypeptide exit tunnel on the outside of the subunit. This Roseobacter denitrificans (strain ATCC 33942 / OCh 114) (Erythrobacter sp. (strain OCh 114)) protein is Large ribosomal subunit protein uL24.